A 243-amino-acid polypeptide reads, in one-letter code: 1-(5-phosphoribosyl)-5-[(5-phosphoribosylamino)methylideneamino] imidazole-4-carboxamide isomerase (243 aa).

Asp-10 (proton acceptor) is an active-site residue. Asp-131 functions as the Proton donor in the catalytic mechanism.

It belongs to the HisA/HisF family.

It localises to the cytoplasm. It carries out the reaction 1-(5-phospho-beta-D-ribosyl)-5-[(5-phospho-beta-D-ribosylamino)methylideneamino]imidazole-4-carboxamide = 5-[(5-phospho-1-deoxy-D-ribulos-1-ylimino)methylamino]-1-(5-phospho-beta-D-ribosyl)imidazole-4-carboxamide. Its pathway is amino-acid biosynthesis; L-histidine biosynthesis; L-histidine from 5-phospho-alpha-D-ribose 1-diphosphate: step 4/9. The chain is 1-(5-phosphoribosyl)-5-[(5-phosphoribosylamino)methylideneamino] imidazole-4-carboxamide isomerase from Rhizorhabdus wittichii (strain DSM 6014 / CCUG 31198 / JCM 15750 / NBRC 105917 / EY 4224 / RW1) (Sphingomonas wittichii).